A 486-amino-acid chain; its full sequence is Pup--protein ligase (486 aa).

Glutamate 33 serves as a coordination point for Mg(2+). Residue arginine 76 participates in ATP binding. Tyrosine 78 is a Mg(2+) binding site. The active-site Proton acceptor is the aspartate 80. Mg(2+) is bound at residue glutamate 86. Positions 89 and 451 each coordinate ATP.

The protein belongs to the Pup ligase/Pup deamidase family. Pup-conjugating enzyme subfamily.

The enzyme catalyses ATP + [prokaryotic ubiquitin-like protein]-L-glutamate + [protein]-L-lysine = ADP + phosphate + N(6)-([prokaryotic ubiquitin-like protein]-gamma-L-glutamyl)-[protein]-L-lysine.. Its pathway is protein degradation; proteasomal Pup-dependent pathway. The protein operates within protein modification; protein pupylation. Functionally, catalyzes the covalent attachment of the prokaryotic ubiquitin-like protein modifier Pup to the proteasomal substrate proteins, thereby targeting them for proteasomal degradation. This tagging system is termed pupylation. The ligation reaction involves the side-chain carboxylate of the C-terminal glutamate of Pup and the side-chain amino group of a substrate lysine. This is Pup--protein ligase from Bifidobacterium longum (strain NCC 2705).